The chain runs to 457 residues: Argininosuccinate lyase (457 aa).

This sequence belongs to the lyase 1 family. Argininosuccinate lyase subfamily.

Its subcellular location is the cytoplasm. The enzyme catalyses 2-(N(omega)-L-arginino)succinate = fumarate + L-arginine. It functions in the pathway amino-acid biosynthesis; L-arginine biosynthesis; L-arginine from L-ornithine and carbamoyl phosphate: step 3/3. This is Argininosuccinate lyase from Haemophilus influenzae (strain PittGG).